Consider the following 186-residue polypeptide: UPF0397 protein SGO_0469 (186 aa).

5 helical membrane passes run 14 to 34 (VVAT…SIPT), 50 to 70 (LFGV…GHAL), 77 to 97 (GNPW…VGLL), 119 to 139 (AQFV…DILI), and 152 to 172 (VVAT…LLIA).

It belongs to the UPF0397 family.

The protein resides in the cell membrane. The polypeptide is UPF0397 protein SGO_0469 (Streptococcus gordonii (strain Challis / ATCC 35105 / BCRC 15272 / CH1 / DL1 / V288)).